We begin with the raw amino-acid sequence, 304 residues long: Coenzyme PQQ synthesis protein B (304 aa).

This sequence belongs to the PqqB family.

The protein operates within cofactor biosynthesis; pyrroloquinoline quinone biosynthesis. Its function is as follows. May be involved in the transport of PQQ or its precursor to the periplasm. The polypeptide is Coenzyme PQQ synthesis protein B (Pseudomonas aeruginosa (strain UCBPP-PA14)).